We begin with the raw amino-acid sequence, 327 residues long: uncharacterized protein (327 aa).

2 disordered regions span residues 127–170 (LSEF…GIYR) and 298–327 (NFEDVNDGSLASPVQIGQSYRKRKKNLKRR). A phosphoserine mark is found at serine 153, serine 154, and serine 309. Over residues 317 to 327 (YRKRKKNLKRR) the composition is skewed to basic residues.

This is an uncharacterized protein from Schizosaccharomyces pombe (strain 972 / ATCC 24843) (Fission yeast).